Reading from the N-terminus, the 429-residue chain is MSKSLQAIRGMNDILPEQTPLWRYFESTVARLLDNYGYKQIRMPIVEFTELFKRSIGEVTDIVEKEMYTFEDRNGDSLTLRPEGTAACVRAVLEHGLTGGGQPQKLWYIGPMFRHERPQKGRYRQFHQIGLEVFNLDGPDIDAELIVLTWRLWGVLGIRDAVKLELNSLGTSESRGRYRVALVEYLSAHLDKLDEDSQRRLKTNPLRVLDTKNADTQAVLVNAPKMADYLDDESRTHFEGLKARLDAAGIPYVINPKLVRGLDYYSKTVFEWVTEKLGAQGTVCAGGRYDGLVEQMGGKPTTGVGFAMGIERLILLLETLEQVPEEISRQVDVYLCAFGEAAELAALALSEKVRDQLPNLRLQINAGAGSFKSQFKKADKSGALYALILGEDELAQQVIGFKPLRGQGEQQNIAFDALAAHLATCVVQG.

Belongs to the class-II aminoacyl-tRNA synthetase family. As to quaternary structure, homodimer.

The protein resides in the cytoplasm. It carries out the reaction tRNA(His) + L-histidine + ATP = L-histidyl-tRNA(His) + AMP + diphosphate + H(+). This is Histidine--tRNA ligase from Pseudomonas fluorescens (strain SBW25).